The chain runs to 284 residues: Tropomyosin (284 aa).

The stretch at 1–284 forms a coiled coil; it reads MDAIKKKMLA…DSTFAELAGY (284 aa). The disordered stretch occupies residues 105 to 131; it reads RLQSATEKLEEASKAADESERGRKVLE.

This sequence belongs to the tropomyosin family. In terms of assembly, homodimer.

Tropomyosin, in association with the troponin complex, plays a central role in the calcium dependent regulation of muscle contraction. The chain is Tropomyosin from Cornu aspersum (Brown garden snail).